We begin with the raw amino-acid sequence, 166 residues long: Ribosome maturation factor RimM (166 aa).

The PRC barrel domain maps to Glu94–Leu166.

This sequence belongs to the RimM family. In terms of assembly, binds ribosomal protein uS19.

The protein localises to the cytoplasm. Its function is as follows. An accessory protein needed during the final step in the assembly of 30S ribosomal subunit, possibly for assembly of the head region. Essential for efficient processing of 16S rRNA. May be needed both before and after RbfA during the maturation of 16S rRNA. It has affinity for free ribosomal 30S subunits but not for 70S ribosomes. The chain is Ribosome maturation factor RimM from Rickettsia bellii (strain RML369-C).